A 479-amino-acid polypeptide reads, in one-letter code: Ribosomal RNA small subunit methyltransferase F (479 aa).

S-adenosyl-L-methionine-binding positions include 125 to 131 (AAAPGSK), Glu-149, Asp-176, and Asp-194. Cys-247 acts as the Nucleophile in catalysis.

Belongs to the class I-like SAM-binding methyltransferase superfamily. RsmB/NOP family.

Its subcellular location is the cytoplasm. The enzyme catalyses cytidine(1407) in 16S rRNA + S-adenosyl-L-methionine = 5-methylcytidine(1407) in 16S rRNA + S-adenosyl-L-homocysteine + H(+). Specifically methylates the cytosine at position 1407 (m5C1407) of 16S rRNA. In Salmonella enteritidis PT4 (strain P125109), this protein is Ribosomal RNA small subunit methyltransferase F.